The chain runs to 166 residues: Phosphopantetheine adenylyltransferase (166 aa).

Ser-11 provides a ligand contact to substrate. Residues 11–12 (SF) and His-19 contribute to the ATP site. Substrate contacts are provided by Lys-43, Val-80, and Arg-94. Residues 95–97 (GLR), Glu-105, and 130–136 (VRTVTAT) each bind ATP.

This sequence belongs to the bacterial CoaD family. In terms of assembly, homohexamer. Mg(2+) is required as a cofactor.

It localises to the cytoplasm. It carries out the reaction (R)-4'-phosphopantetheine + ATP + H(+) = 3'-dephospho-CoA + diphosphate. The protein operates within cofactor biosynthesis; coenzyme A biosynthesis; CoA from (R)-pantothenate: step 4/5. Reversibly transfers an adenylyl group from ATP to 4'-phosphopantetheine, yielding dephospho-CoA (dPCoA) and pyrophosphate. The protein is Phosphopantetheine adenylyltransferase of Chelativorans sp. (strain BNC1).